The sequence spans 72 residues: MGISKKTVVQSFALIIIISIVMSTTEANSIGAPAMREDLPKGCAPGSSAGCKMQPANPYKPGCEASQRCRGG.

An N-terminal signal peptide occupies residues 1-27 (MGISKKTVVQSFALIIIISIVMSTTEA). Intrachain disulfides connect Cys43–Cys51 and Cys63–Cys69.

It belongs to the plant rapid alkalinization factor (RALF) family.

The protein resides in the secreted. In terms of biological role, cell signaling peptide that may regulate plant stress, growth, and development. Mediates a rapid alkalinization of extracellular space by mediating a transient increase in the cytoplasmic Ca(2+) concentration leading to a calcium-dependent signaling events through a cell surface receptor and a concomitant activation of some intracellular mitogen-activated protein kinases. The polypeptide is Protein RALF-like 36 (Arabidopsis thaliana (Mouse-ear cress)).